The sequence spans 492 residues: Membrane-bound glycerophospholipid O-acyltransferase 1 (492 aa).

6 helical membrane passes run 33–53 (VNFV…RIYL), 69–89 (ILGI…LFVL), 125–145 (IYIF…MIVT), 179–199 (PSLL…AGPC), 237–257 (MGAV…FLTL), and 296–316 (YFAW…FNGM). Active-site residues include asparagine 349 and histidine 380. The next 3 helical transmembrane spans lie at 370 to 390 (VLTF…YFTF), 423 to 443 (VVTW…FVML), and 452 to 472 (YKSV…FLPI). The residue at position 486 (serine 486) is a Phosphoserine.

It belongs to the membrane-bound acyltransferase family. As to expression, highly expressed in stomach, epididymis, and colon.

The protein localises to the endoplasmic reticulum membrane. The catalysed reaction is a 1-acyl-sn-glycero-3-phosphoethanolamine + an acyl-CoA = a 1,2-diacyl-sn-glycero-3-phosphoethanolamine + CoA. It carries out the reaction a 1-acyl-sn-glycero-3-phospho-L-serine + an acyl-CoA = a 1,2-diacyl-sn-glycero-3-phospho-L-serine + CoA. The enzyme catalyses a 1-acyl-sn-glycero-3-phosphocholine + an acyl-CoA = a 1,2-diacyl-sn-glycero-3-phosphocholine + CoA. It catalyses the reaction a 1-O-(1Z-alkenyl)-sn-glycero-3-phosphoethanolamine + (9Z)-octadecenoyl-CoA = 1-O-(1Z)-alkenyl-2-(9Z)-octadecenoyl-sn-glycero-3-phosphoethanolamine + CoA. The catalysed reaction is 1-octadecanoyl-sn-glycero-3-phosphoethanolamine + (9Z)-octadecenoyl-CoA = 1-octadecanoyl-2-(9Z-octadecenoyl)-sn-glycero-3-phosphoethanolamine + CoA. It carries out the reaction 1-(9Z-octadecenoyl)-sn-glycero-3-phospho-L-serine + (9Z)-octadecenoyl-CoA = 1,2-di-(9Z)-octadecenoyl-sn-glycero-3-phospho-L-serine + CoA. The enzyme catalyses 1-(9Z-octadecenoyl)-sn-glycero-3-phosphoethanolamine + (9Z)-octadecenoyl-CoA = 1,2-di-(9Z-octadecenoyl)-sn-glycero-3-phosphoethanolamine + CoA. It catalyses the reaction 1-hexadecanoyl-sn-glycero-3-phosphoethanolamine + (9Z)-octadecenoyl-CoA = 1-hexadecanoyl-2-(9Z-octadecenoyl)-sn-glycero-3-phosphoethanolamine + CoA. The catalysed reaction is 1-(10Z-heptadecenoyl)-sn-glycero-3-phosphoethanolamine + hexadecanoyl-CoA = 1-(10Z-heptadecenoyl)-2-hexadecanoyl-sn-glycero-3-phosphoethanolamine + CoA. It carries out the reaction 1-(9Z-octadecenoyl)-sn-glycero-3-phospho-L-serine + octadecanoyl-CoA = 1-(9Z-octadecenoyl)-2-octadecanoyl-sn-glycero-3-phospho-L-serine + CoA. The enzyme catalyses 1-(9Z-octadecenoyl)-sn-glycero-3-phospho-L-serine + (9Z)-hexadecenoyl-CoA = 1-(9Z-octadecenoyl)-2-(9Z-hexadecenoyl)-sn-glycero-3-phospho-L-serine + CoA. It catalyses the reaction 1-(9Z-octadecenoyl)-sn-glycero-3-phospho-L-serine + (9Z,12Z)-octadecadienoyl-CoA = 1-(9Z-octadecenoyl)-2-(9Z,12Z-octadienoyl)-sn-glycero-3-phospho-L-serine + CoA. The catalysed reaction is 1-hexadecanoyl-sn-glycero-3-phosphocholine + (9Z)-octadecenoyl-CoA = 1-hexadecanoyl-2-(9Z-octadecenoyl)-sn-glycero-3-phosphocholine + CoA. It carries out the reaction 1-(10Z-heptadecenoyl)-sn-glycero-3-phosphoethanolamine + (9Z)-octadecenoyl-CoA = 1-(10Z-heptadecenoyl)-2-(9Z-octadecenoyl)-sn-glycero-3-phosphoethanolamine + CoA. The protein operates within lipid metabolism; phospholipid metabolism. Functionally, acyltransferase which catalyzes the transfer of an acyl group from an acyl-CoA towards a lysophospholipid producing a phospholipid and participates in the reacylation step of the phospholipid remodeling pathway also known as the Lands cycle. Acts on lysophosphatidylserine (1-acyl-2-hydroxy-sn-glycero-3-phospho-L-serine or LPS) and lysophosphatidylethanolamine (1-acyl-sn-glycero-3-phosphoethanolamine or LPE), and to a lesser extend lysophosphatidylcholine. Prefers oleoyl-CoA as the acyl donor and 1-oleoyl-LPE as acceptor. May play a role in neurite outgrowth during neuronal differentiation. In Mus musculus (Mouse), this protein is Membrane-bound glycerophospholipid O-acyltransferase 1.